Consider the following 310-residue polypeptide: Apolipoprotein E (310 aa).

A signal peptide spans 1 to 18; the sequence is MKVLWAALVVTLLAGCGA. 8 consecutive repeat copies span residues 77-98, 99-120, 121-142, 143-164, 165-186, 187-208, 209-226, and 227-248. Residues 77-248 form an 8 X 22 AA approximate tandem repeats region; it reads ALMDDTMKEV…RLDEVREQVQ (172 aa). Positions 155–165 are LDL and other lipoprotein receptors binding; that stretch reads HLRKMRKRLLR. 159-162 serves as a coordination point for heparin; the sequence is MRKR. The tract at residues 207–283 is lipid-binding and lipoprotein association; sequence HTLVSKPLQE…SWFEPLVQDM (77 aa). 222–229 is a heparin binding site; the sequence is AQRLRGRL. A homooligomerization region spans residues 259 to 310; it reads NQVRLQAEAFQGRLKSWFEPLVQDMQQKWAELVEKVQLAVGAVPTSVPSEKQ. The interval 271-283 is specificity for association with VLDL; the sequence is RLKSWFEPLVQDM.

Belongs to the apolipoprotein A1/A4/E family. As to quaternary structure, homotetramer. May interact with ABCA1; functionally associated with ABCA1 in the biogenesis of HDLs. May interact with APP/A4 amyloid-beta peptide; the interaction is extremely stable in vitro but its physiological significance is unclear. May interact with MAPT. May interact with MAP2. In the cerebrospinal fluid, interacts with secreted SORL1. Interacts with PMEL; this allows the loading of PMEL luminal fragment on ILVs to induce fibril nucleation. In terms of processing, APOE exists as multiple glycosylated and sialylated glycoforms within cells and in plasma. The extent of glycosylation and sialylation are tissue and context specific. Post-translationally, glycated in plasma VLDL. Phosphorylated by FAM20C in the extracellular medium.

The protein resides in the secreted. The protein localises to the extracellular space. Its subcellular location is the extracellular matrix. It is found in the extracellular vesicle. It localises to the endosome. The protein resides in the multivesicular body. Its function is as follows. APOE is an apolipoprotein, a protein associating with lipid particles, that mainly functions in lipoprotein-mediated lipid transport between organs via the plasma and interstitial fluids. APOE is a core component of plasma lipoproteins and is involved in their production, conversion and clearance. Apolipoproteins are amphipathic molecules that interact both with lipids of the lipoprotein particle core and the aqueous environment of the plasma. As such, APOE associates with chylomicrons, chylomicron remnants, very low density lipoproteins (VLDL) and intermediate density lipoproteins (IDL) but shows a preferential binding to high-density lipoproteins (HDL). It also binds a wide range of cellular receptors including the LDL receptor/LDLR and the very low-density lipoprotein receptor/VLDLR that mediate the cellular uptake of the APOE-containing lipoprotein particles. Finally, APOE also has a heparin-binding activity and binds heparan-sulfate proteoglycans on the surface of cells, a property that supports the capture and the receptor-mediated uptake of APOE-containing lipoproteins by cells. This Ceratotherium simum cottoni (Northern white rhinoceros) protein is Apolipoprotein E (APOE).